A 284-amino-acid chain; its full sequence is Bifunctional protein FolD (284 aa).

NADP(+) is bound by residues 164–166 (GRS) and serine 189.

This sequence belongs to the tetrahydrofolate dehydrogenase/cyclohydrolase family. Homodimer.

It carries out the reaction (6R)-5,10-methylene-5,6,7,8-tetrahydrofolate + NADP(+) = (6R)-5,10-methenyltetrahydrofolate + NADPH. It catalyses the reaction (6R)-5,10-methenyltetrahydrofolate + H2O = (6R)-10-formyltetrahydrofolate + H(+). It participates in one-carbon metabolism; tetrahydrofolate interconversion. Its function is as follows. Catalyzes the oxidation of 5,10-methylenetetrahydrofolate to 5,10-methenyltetrahydrofolate and then the hydrolysis of 5,10-methenyltetrahydrofolate to 10-formyltetrahydrofolate. This is Bifunctional protein FolD from Listeria monocytogenes serotype 4a (strain HCC23).